An 899-amino-acid polypeptide reads, in one-letter code: UPF0182 protein Mhun_1303 (899 aa).

7 helical membrane passes run 6–26 (LLIFIPAAVILLFFLLTDLLS), 39–59 (VFLTILITSAALFVIGTLLFF), 93–113 (VAAGITGLSLSSSWEIILAFL), 136–156 (LPFYTILIQYLLALFVFTLII), 196–216 (FLPQVNCLLFLIFTTLAAFLW), 240–260 (ITIPALTILTVIAFLIGLLFL), and 271–291 (IAYGIGGFFIIAILSAGAGFL).

This sequence belongs to the UPF0182 family.

The protein resides in the cell membrane. The chain is UPF0182 protein Mhun_1303 from Methanospirillum hungatei JF-1 (strain ATCC 27890 / DSM 864 / NBRC 100397 / JF-1).